Consider the following 230-residue polypeptide: Ribose-5-phosphate isomerase A (230 aa).

Substrate-binding positions include 29-32, 85-88, and 98-101; these read TGST, DGAD, and KGGG. Residue glutamate 107 is the Proton acceptor of the active site. Lysine 125 is a substrate binding site.

This sequence belongs to the ribose 5-phosphate isomerase family. Homodimer.

The enzyme catalyses aldehydo-D-ribose 5-phosphate = D-ribulose 5-phosphate. It functions in the pathway carbohydrate degradation; pentose phosphate pathway; D-ribose 5-phosphate from D-ribulose 5-phosphate (non-oxidative stage): step 1/1. Functionally, catalyzes the reversible conversion of ribose-5-phosphate to ribulose 5-phosphate. In Staphylococcus haemolyticus (strain JCSC1435), this protein is Ribose-5-phosphate isomerase A.